We begin with the raw amino-acid sequence, 73 residues long: Large ribosomal subunit protein bL31 (73 aa).

It belongs to the bacterial ribosomal protein bL31 family. Type A subfamily. As to quaternary structure, part of the 50S ribosomal subunit.

Functionally, binds the 23S rRNA. In Synechococcus sp. (strain JA-3-3Ab) (Cyanobacteria bacterium Yellowstone A-Prime), this protein is Large ribosomal subunit protein bL31.